The primary structure comprises 132 residues: tRNA (cytidine(56)-2'-O)-methyltransferase (132 aa).

S-adenosyl-L-methionine-binding positions include Leu35, 65 to 69 (GSEKV), and 83 to 90 (IGNQPHSE).

It belongs to the aTrm56 family. Homodimer.

Its subcellular location is the cytoplasm. It carries out the reaction cytidine(56) in tRNA + S-adenosyl-L-methionine = 2'-O-methylcytidine(56) in tRNA + S-adenosyl-L-homocysteine + H(+). Functionally, specifically catalyzes the AdoMet-dependent 2'-O-ribose methylation of cytidine at position 56 in tRNAs. This chain is tRNA (cytidine(56)-2'-O)-methyltransferase, found in Sulfolobus acidocaldarius (strain ATCC 33909 / DSM 639 / JCM 8929 / NBRC 15157 / NCIMB 11770).